The chain runs to 241 residues: Zinc finger CCHC domain-containing protein 24 (241 aa).

Residues S65 and S93 each carry the phosphoserine modification. Residues 132–149 form a CCHC-type zinc finger; it reads YLCHLCFNKGHYIKDCPQ.

This chain is Zinc finger CCHC domain-containing protein 24 (ZCCHC24), found in Homo sapiens (Human).